Consider the following 176-residue polypeptide: Insulin-like growth factor 1 (176 aa).

The interval 45-73 (GPETLCGAELVDTLQFVCGERGFYFSKPT) is b. Cystine bridges form between Cys-50–Cys-92, Cys-62–Cys-105, and Cys-91–Cys-96. The c stretch occupies residues 74 to 85 (GYGPSSRRSHNR). The segment at 86–106 (GIVDECCFQSCELRRLEMYCA) is a. The segment at 107–114 (PVKSGKAA) is d. The propeptide at 115 to 176 (RSVRAQRHTD…GNTGGRNYRM (62 aa)) is e peptide. Positions 115–176 (RSVRAQRHTD…GNTGGRNYRM (62 aa)) are disordered. Residues 140 to 161 (RGTERRTAQHPDKTKPKKEVHQ) are compositionally biased toward basic and acidic residues.

Belongs to the insulin family.

The protein resides in the secreted. Its function is as follows. The insulin-like growth factors, isolated from plasma, are structurally and functionally related to insulin but have a much higher growth-promoting activity. Acts as a ligand for IGF1R. Binds to the alpha subunit of IGF1R, leading to the activation of the intrinsic tyrosine kinase activity which autophosphorylates tyrosine residues in the beta subunit thus initiatiating a cascade of down-stream signaling events leading to activation of the PI3K-AKT/PKB and the Ras-MAPK pathways. Binds to integrins. Its binding to integrins and subsequent ternary complex formation with integrins and IGFR1 are essential for IGF1 signaling. The chain is Insulin-like growth factor 1 from Oncorhynchus mykiss (Rainbow trout).